The following is a 248-amino-acid chain: MDIVRSPISTLNHIYDISGVEVGQHFYWQIGGFQVHGQVLITSWIVIAVLLGSATIAVRDPQTIPTGGQNFVEYILEFFRDLTRTQIGEEEYGPWVPFIGTMFLFIFVSNWSGALLPWGILKLPQGELAAPTNDINTTVALALLTSVAYFYAGLAKKGLGYFGKYIQPTPILLPINILEDFTKPLSLSFRLFGNILADELVVAVLVSPVPLVVPIPVMFLGLFTSGIQALIFATLAAAYIGESMEGHH.

5 consecutive transmembrane segments (helical) span residues Q38–V58, V96–L116, I135–A155, L200–L220, and G221–G241.

This sequence belongs to the ATPase A chain family. As to quaternary structure, F-type ATPases have 2 components, CF(1) - the catalytic core - and CF(0) - the membrane proton channel. CF(1) has five subunits: alpha(3), beta(3), gamma(1), delta(1), epsilon(1). CF(0) has four main subunits: a, b, b' and c.

The protein resides in the plastid. It localises to the chloroplast thylakoid membrane. In terms of biological role, key component of the proton channel; it plays a direct role in the translocation of protons across the membrane. In Pinus koraiensis (Korean pine), this protein is ATP synthase subunit a, chloroplastic.